The primary structure comprises 251 residues: Regulator of G-protein signaling 7-binding protein B (251 aa).

The disordered stretch occupies residues 1–43 (MCSAPNGRKNRPRSAANIFQIGKSSVRDPERRESTESARRAQR). Basic and acidic residues predominate over residues 25-43 (SVRDPERRESTESARRAQR). 2 S-palmitoyl cysteine lipidation sites follow: Cys-246 and Cys-247.

The protein belongs to the RGS7BP/RGS9BP family. Post-translationally, palmitoylated. Undergoes rapid palmitoylation turnover. Palmitoylation regulates the cell membrane and nuclear shuttling and the regulation of GPCR signaling. Upon depalmitoylation, it is targeted from the plasma membrane into the nucleus. GPCR signaling inhibits depalmitoylation and promotes localization to the plasma membrane.

The protein localises to the nucleus. Its subcellular location is the cytoplasm. It localises to the cell membrane. Regulator of G protein-coupled receptor (GPCR) signaling. Regulatory subunit of the R7-Gbeta5 complexes that acts by controlling the subcellular location of the R7-Gbeta5 complexes. When palmitoylated, it targets the R7-Gbeta5 complexes to the plasma membrane, leading to inhibit G protein alpha subunits. When it is unpalmitoylated, the R7-Gbeta5 complexes undergo a nuclear/cytoplasmic shuttling. The sequence is that of Regulator of G-protein signaling 7-binding protein B (rgs7bpb) from Danio rerio (Zebrafish).